The sequence spans 333 residues: D-alanine--D-alanine ligase (333 aa).

The 206-residue stretch at 124 to 329 (KMWFSALGIP…FTEYLYSNIK (206 aa)) folds into the ATP-grasp domain. An ATP-binding site is contributed by 154-209 (ALETWGSVFIKAASQGSSVGCYRVDSIDELASSLKEAFSYSPYVVVEKTIHARELE). The Mg(2+) site is built by aspartate 283, glutamate 296, and asparagine 298.

Belongs to the D-alanine--D-alanine ligase family. The cofactor is Mg(2+). Requires Mn(2+) as cofactor.

It localises to the cytoplasm. It carries out the reaction 2 D-alanine + ATP = D-alanyl-D-alanine + ADP + phosphate + H(+). It functions in the pathway cell wall biogenesis; peptidoglycan biosynthesis. Cell wall formation. This is D-alanine--D-alanine ligase from Shewanella sediminis (strain HAW-EB3).